We begin with the raw amino-acid sequence, 299 residues long: UDP-N-acetylenolpyruvoylglucosamine reductase (299 aa).

The 166-residue stretch at 27-192 (KSGGAADWLF…VGATFRGRPG (166 aa)) folds into the FAD-binding PCMH-type domain. Arg172 is a catalytic residue. Residues 206–225 (ASREASQPLRSRTGGSTFKN) are disordered. Residues 208-224 (REASQPLRSRTGGSTFK) are compositionally biased toward polar residues. Ser221 functions as the Proton donor in the catalytic mechanism. The active site involves Glu291.

It belongs to the MurB family. Requires FAD as cofactor.

The protein resides in the cytoplasm. It catalyses the reaction UDP-N-acetyl-alpha-D-muramate + NADP(+) = UDP-N-acetyl-3-O-(1-carboxyvinyl)-alpha-D-glucosamine + NADPH + H(+). The protein operates within cell wall biogenesis; peptidoglycan biosynthesis. In terms of biological role, cell wall formation. The polypeptide is UDP-N-acetylenolpyruvoylglucosamine reductase (Sphingopyxis alaskensis (strain DSM 13593 / LMG 18877 / RB2256) (Sphingomonas alaskensis)).